The primary structure comprises 411 residues: uncharacterized protein (411 aa).

A UmuC domain is found at 20–199; it reads FLYFDFDAFF…LPITEIPGIG (180 aa).

Belongs to the DNA polymerase type-Y family.

This is an uncharacterized protein from Mycoplasma genitalium (strain ATCC 33530 / DSM 19775 / NCTC 10195 / G37) (Mycoplasmoides genitalium).